The primary structure comprises 457 residues: MALNLLSIPPSYHGLIIQRIPLKTGLVPAEPLKTLAPSKSKLNTIEAKRIMSVLDEAINKVELITLMSYLESHPEALEDALPENFVEAIREHLDIGQALVEKASILQRKQKELEKGEEAEEDWDQERLLSIELHKTNLWPLTHQFRDSTKTILRLLINEPQLTRLLHTQAPGRSPGAQCLLTSLVELRGFLFEKLLTSPMEVREKNQFIQDISRRSKRNQEIIDALQAELAEVLKNKEAEVEKENFVIQELKNHLHQVFKFSENSLLRTKQEAEKQQKVDYRASQARQAKTQQDILALRAQYHNLVMENREAEQALRKKKYKVETEIENWIQKYDMEMNEKQEEYEDLETIHKEEKLQLEELKERHAVLVEEFSQIRAESEINSKKRVEAEREMVRMVRAATLIQAMWKGYLVRSMLRSRKKKRVKSKGKDKGKGKEKPKEEKGKEKKAKGKGKGKK.

Coiled coils occupy residues 101 to 127, 209 to 258, and 292 to 381; these read EKASILQRKQKELEKGEEAEEDWDQER, IQDI…LHQV, and QQDI…AESE. One can recognise an IQ domain in the interval 397–426; sequence MVRAATLIQAMWKGYLVRSMLRSRKKKRVK. A disordered region spans residues 419 to 457; sequence SRKKKRVKSKGKDKGKGKEKPKEEKGKEKKAKGKGKGKK. Basic and acidic residues predominate over residues 428–445; the sequence is KGKDKGKGKEKPKEEKGK. The span at 446 to 457 shows a compositional bias: basic residues; sequence EKKAKGKGKGKK.

Belongs to the DRC10 family. Component of the nexin-dynein regulatory complex (N-DRC). Interacts with CFAP52.

It is found in the cytoplasm. The protein resides in the cytoskeleton. Its subcellular location is the flagellum axoneme. Functionally, component of the nexin-dynein regulatory complex (N-DRC), a key regulator of ciliary/flagellar motility which maintains the alignment and integrity of the distal axoneme and regulates microtubule sliding in motile axonemes. This Rattus norvegicus (Rat) protein is Dynein regulatory complex protein 10 (Iqcd).